Here is a 619-residue protein sequence, read N- to C-terminus: MALLQIAEPGQSPKPHERRLAVGIDLGTTNSLVAAVRSGVAEPLPDARGRLILPSAVRYHADRAEVGEGARAAAAQDPLNTIISVKRLMGRGLEDVKQLGEQLPYRFRQGESHMPFIETVQGLKSPVEVSADILRELRQRAETTLGGELVGAVITVPAYFDDAQRQATKDAARLAGLNVLRLLNEPTAAAVAYGLDKGAEGLVAIYDLGGGTFDISILRLTRGVFEVLATGGDTALGGDDFDHAVAGWVIEQAGLSADLDPGRQRELLQIACAAKERLTDATSVSVSYGDWRGELSRAKLDELIEPFIARSLRSCRRAVRDSGIDLEEIRSVVMVGGSTRVPRVRSAVGELFGCEPLTDIDPDQVVAIGAAIQADALAGNKRGEELLLLDVIPLSLGLETMGGLMEKVIPRNTTIPVARAQEFTTYKDGQTAMMIHVLQGERELVKDCRSLARFELRGIPPMVAGAAKIRVTFQVDADGLLGVSARELSSGVEASIQVKPSYGLTDGEIARMLKDSFDYAGDDKAARALREQQVEAQRLLEAVQSALDADGERLLDEEEHLAIAAQMDSLRELAGGSDTAAIENQIKRLSQVTDAFAARRMDATVKAALSGRRLNEIEE.

This sequence belongs to the heat shock protein 70 family.

Chaperone involved in the maturation of iron-sulfur cluster-containing proteins. Has a low intrinsic ATPase activity which is markedly stimulated by HscB. The protein is Chaperone protein HscA homolog of Pseudomonas paraeruginosa (strain DSM 24068 / PA7) (Pseudomonas aeruginosa (strain PA7)).